The primary structure comprises 246 residues: DNA repair protein RecO (246 aa).

Belongs to the RecO family.

In terms of biological role, involved in DNA repair and RecF pathway recombination. In Bifidobacterium adolescentis (strain ATCC 15703 / DSM 20083 / NCTC 11814 / E194a), this protein is DNA repair protein RecO.